A 688-amino-acid chain; its full sequence is uncharacterized protein (688 aa).

This is an uncharacterized protein from Saccharomyces cerevisiae (strain ATCC 204508 / S288c) (Baker's yeast).